The following is a 1263-amino-acid chain: Topoisomerase 1-associated factor 1 (1263 aa).

2 disordered regions span residues 1042–1098 and 1178–1263; these read ERQL…DDSQ and VEES…DEEE. A compositionally biased stretch (basic residues) spans 1060-1071; sequence TKGKARKKSKEK. Over residues 1179–1189 the composition is skewed to acidic residues; that stretch reads EESDNDDEVEE. Residues 1211–1226 are compositionally biased toward polar residues; sequence VDTQQDLSDNTSNTSD.

This sequence belongs to the timeless family. In terms of assembly, component of the fork protection complex (FPC) consisting of TOF1 and CSM3.

It localises to the nucleus. Functionally, forms a fork protection complex (FPC) with CSM3 and which is required for chromosome segregation during meiosis and DNA damage repair. FPC coordinates leading and lagging strand synthesis and moves with the replication fork. FPC stabilizes replication forks in a configuration that is recognized by replication checkpoint sensors. This Candida albicans (strain SC5314 / ATCC MYA-2876) (Yeast) protein is Topoisomerase 1-associated factor 1 (YBL053).